The primary structure comprises 475 residues: Sulfate adenylyltransferase subunit 1 (475 aa).

A tr-type G domain is found at 25-239 (KSLLRFLTCG…EVLETVEIQR (215 aa)). Positions 34 to 41 (GSVDDGKS) are G1. A GTP-binding site is contributed by 34-41 (GSVDDGKS). Positions 92-96 (GITID) are G2. The G3 stretch occupies residues 113-116 (DTPG). Residues 113-117 (DTPGH) and 168-171 (NKMD) contribute to the GTP site. Residues 168–171 (NKMD) form a G4 region. The tract at residues 206-208 (SAL) is G5.

It belongs to the TRAFAC class translation factor GTPase superfamily. Classic translation factor GTPase family. CysN/NodQ subfamily. Heterodimer composed of CysD, the smaller subunit, and CysN.

It carries out the reaction sulfate + ATP + H(+) = adenosine 5'-phosphosulfate + diphosphate. Its pathway is sulfur metabolism; hydrogen sulfide biosynthesis; sulfite from sulfate: step 1/3. In terms of biological role, with CysD forms the ATP sulfurylase (ATPS) that catalyzes the adenylation of sulfate producing adenosine 5'-phosphosulfate (APS) and diphosphate, the first enzymatic step in sulfur assimilation pathway. APS synthesis involves the formation of a high-energy phosphoric-sulfuric acid anhydride bond driven by GTP hydrolysis by CysN coupled to ATP hydrolysis by CysD. In Escherichia coli O9:H4 (strain HS), this protein is Sulfate adenylyltransferase subunit 1.